A 419-amino-acid chain; its full sequence is L-rhamnose isomerase (419 aa).

His262, Asp294, and Asp296 together coordinate Mn(2+).

Belongs to the rhamnose isomerase family. In terms of assembly, homotetramer. The cofactor is Mn(2+).

It is found in the cytoplasm. It catalyses the reaction L-rhamnopyranose = L-rhamnulose. Its pathway is carbohydrate degradation; L-rhamnose degradation; glycerone phosphate from L-rhamnose: step 1/3. Functionally, catalyzes the interconversion of L-rhamnose and L-rhamnulose. The polypeptide is L-rhamnose isomerase (Enterobacter sp. (strain 638)).